Consider the following 406-residue polypeptide: Vacuole membrane protein 1 (406 aa).

Basic and acidic residues predominate over residues 1-20 (MAENGKNCDQRRVAMNKEQH). Residues 1–36 (MAENGKNCDQRRVAMNKEQHNGNFTDPSSVNEKKRR) form a disordered region. An N-acetylalanine modification is found at A2. The Cytoplasmic segment spans residues 2 to 43 (AENGKNCDQRRVAMNKEQHNGNFTDPSSVNEKKRREREERQN). Residues 21–30 (NGNFTDPSSV) show a composition bias toward polar residues. A helical membrane pass occupies residues 44-64 (IVLWRQPLITLQYFSLEILVI). At 65–77 (LKEWTSKLWHRQS) the chain is on the extracellular side. The helical transmembrane segment at 78–98 (IVVSFLLLLAVLIATYYVEGA) threads the bilayer. The Cytoplasmic segment spans residues 99-109 (HQQYVQRIEKQ). Residues 110–130 (FLLYAYWIGLGILSSVGLGTG) traverse the membrane as a helical segment. At 131-250 (LHTFLLYLGP…ASRAKLAVQK (120 aa)) the chain is on the extracellular side. The interval 173-316 (GTEGTISLWS…FVIITFSKHI (144 aa)) is VTT domain. The helical transmembrane segment at 251–271 (LVQKVGFFGILACASIPNPLF) threads the bilayer. Over 272–273 (DL) the chain is Cytoplasmic. Residues 274–294 (AGITCGHFLVPFWTFFGATLI) form a helical membrane-spanning segment. At 295 to 305 (GKAIIKMHIQK) the chain is on the extracellular side. A helical transmembrane segment spans residues 306-326 (IFVIITFSKHIVEQMVAFIGA). The Cytoplasmic segment spans residues 327–363 (VPGIGPSLQKPFQEYLEAQRQKLHHKSEMGTPQGENW). A helical transmembrane segment spans residues 364–384 (LSWMFEKLVVVMVCYFILSII). Residues 385–406 (NSMAQSYAKRIQQRLNSEEKTK) lie on the Extracellular side of the membrane.

The protein belongs to the VMP1 family. Interacts with BECN1. Interacts with TJP1. Interacts with TP53INP2. Interacts with TMEM41B. Interacts with ATP2A2, PLN and SLN; competes with PLN and SLN to prevent them from forming an inhibitory complex with ATP2A2. Interacts with ATG2A.

It is found in the endoplasmic reticulum-Golgi intermediate compartment membrane. The protein resides in the cell membrane. Its subcellular location is the vacuole membrane. It localises to the endoplasmic reticulum membrane. It carries out the reaction a 1,2-diacyl-sn-glycero-3-phospho-L-serine(in) = a 1,2-diacyl-sn-glycero-3-phospho-L-serine(out). The enzyme catalyses cholesterol(in) = cholesterol(out). It catalyses the reaction a 1,2-diacyl-sn-glycero-3-phosphocholine(in) = a 1,2-diacyl-sn-glycero-3-phosphocholine(out). The catalysed reaction is a 1,2-diacyl-sn-glycero-3-phosphoethanolamine(in) = a 1,2-diacyl-sn-glycero-3-phosphoethanolamine(out). Phospholipid scramblase involved in lipid homeostasis and membrane dynamics processes. Has phospholipid scramblase activity toward cholesterol and phosphatidylserine, as well as phosphatidylethanolamine and phosphatidylcholine. Required for autophagosome formation: participates in early stages of autophagosome biogenesis at the endoplasmic reticulum (ER) membrane by reequilibrating the leaflets of the ER as lipids are extracted by ATG2 (ATG2A or ATG2B) to mediate autophagosome assembly. Regulates ATP2A2 activity to control ER-isolation membrane contacts for autophagosome formation. In addition to autophagy, involved in other processes in which phospholipid scramblase activity is required. Modulates ER contacts with lipid droplets, mitochondria and endosomes. Plays an essential role in formation of cell junctions. Upon stress such as bacterial and viral infection, promotes formation of cytoplasmic vacuoles followed by cell death. Involved in the cytoplasmic vacuolization of acinar cells during the early stage of acute pancreatitis. This is Vacuole membrane protein 1 from Pongo abelii (Sumatran orangutan).